A 467-amino-acid polypeptide reads, in one-letter code: uncharacterized protein (467 aa).

A disordered region spans residues 1-60 (MVRVSRGCQSCVDAKLQSTPSPSPSKSPSPTESPEQCLQKRQSGEQVVLPSRPFPRTSPR).

In terms of biological role, involved in osmoadaptation. This is an uncharacterized protein from Emericella nidulans (strain FGSC A4 / ATCC 38163 / CBS 112.46 / NRRL 194 / M139) (Aspergillus nidulans).